A 116-amino-acid chain; its full sequence is Iron-sulfur cluster insertion protein ErpA (116 aa).

Positions 44, 108, and 110 each coordinate iron-sulfur cluster.

Belongs to the HesB/IscA family. In terms of assembly, homodimer. It depends on iron-sulfur cluster as a cofactor.

Its function is as follows. Required for insertion of 4Fe-4S clusters for at least IspG. This Pseudomonas entomophila (strain L48) protein is Iron-sulfur cluster insertion protein ErpA.